Consider the following 101-residue polypeptide: Large ribosomal subunit protein uL23 (101 aa).

It belongs to the universal ribosomal protein uL23 family. In terms of assembly, part of the 50S ribosomal subunit. Contacts protein L29, and trigger factor when it is bound to the ribosome.

Functionally, one of the early assembly proteins it binds 23S rRNA. One of the proteins that surrounds the polypeptide exit tunnel on the outside of the ribosome. Forms the main docking site for trigger factor binding to the ribosome. In Lactobacillus helveticus (strain DPC 4571), this protein is Large ribosomal subunit protein uL23.